A 316-amino-acid chain; its full sequence is Epoxide hydrolase 3 (316 aa).

An AB hydrolase-1 domain is found at 25–302 (PVVLLLHGFP…ACHFINQERP (278 aa)). The active-site Nucleophile is aspartate 101. Tyrosine 150 lines the an epoxide pocket. Tyrosine 230 functions as the Proton donor in the catalytic mechanism. Histidine 295 serves as the catalytic Proton acceptor.

This sequence belongs to the AB hydrolase superfamily. Epoxide hydrolase family. In terms of assembly, homodimer. Highly expressed in young fruits 15 days after anthesis (15-DAA).

The enzyme catalyses an epoxide + H2O = an ethanediol. It carries out the reaction (24S)-24,25-epoxycucurbitadienol + H2O = (24R)-24,25-dihydroxycucurbitadienol. It participates in secondary metabolite biosynthesis; terpenoid biosynthesis. Epoxide hydrolase involved in the biosynthesis of cucurbitacin and mogroside tetracyclic triterpene natural products (e.g. siamenoside I and mogrosides IV, V and VI). Cucurbitacins have cytotoxic properties and exhibit deterrent taste as a defense barrier against herbivores. Mogrosides are nonsugar highly oxygenated compounds used as high-intensity zero-calorie sweeteners; they also possess pharmacological properties such as regulating immunity, lowering blood sugar and lipid levels, protecting the liver, and acting as antioxidants and antitumor agents. Catalyzes the hydrolysis of aromatic epoxide-containing substrates, such as the conversion of 24,25-epoxycucurbitadienol to 24,25-dihydroxycucurbitadienol. The chain is Epoxide hydrolase 3 from Siraitia grosvenorii (Monk's fruit).